Consider the following 153-residue polypeptide: Histone H2A (153 aa).

Disordered stretches follow at residues 1 to 27 (MDTG…VSRS) and 131 to 153 (KAAA…PKKA). Residues 132 to 147 (AAAAATKEPKSPAKAT) are compositionally biased toward low complexity. Residues 149–152 (SPKK) carry the SPKK motif motif.

Belongs to the histone H2A family. In terms of assembly, the nucleosome is a histone octamer containing two molecules each of H2A, H2B, H3 and H4 assembled in one H3-H4 heterotetramer and two H2A-H2B heterodimers. The octamer wraps approximately 147 bp of DNA.

It is found in the nucleus. The protein resides in the chromosome. Core component of nucleosome. Nucleosomes wrap and compact DNA into chromatin, limiting DNA accessibility to the cellular machineries which require DNA as a template. Histones thereby play a central role in transcription regulation, DNA repair, DNA replication and chromosomal stability. DNA accessibility is regulated via a complex set of post-translational modifications of histones, also called histone code, and nucleosome remodeling. This chain is Histone H2A, found in Euphorbia esula (Leafy spurge).